Here is a 341-residue protein sequence, read N- to C-terminus: Homeobox protein knotted-1-like 8 (341 aa).

Residues 1–17 (MESFASLAGGGSSSTTA) show a composition bias toward low complexity. 3 disordered regions span residues 1–72 (MESF…AVQG), 121–148 (AAQQ…DQLD), and 187–207 (AESN…SDKQ). Positions 187–196 (AESNCEGTGS) are enriched in polar residues. In terms of domain architecture, ELK spans 207–227 (QLKHQLLRKYGGSLGDLRQVF). A DNA-binding region (homeobox; TALE-type) is located at residues 228 to 291 (SKRTKKGKLP…NQRKRHWKPT (64 aa)).

The protein belongs to the TALE/KNOX homeobox family.

It localises to the nucleus. Its function is as follows. Probable transcription factor that may be involved in shoot formation during embryogenesis. This Oryza sativa subsp. japonica (Rice) protein is Homeobox protein knotted-1-like 8 (OSH43).